We begin with the raw amino-acid sequence, 320 residues long: MARPKIALIGAGQIGGTLAHLAAIKELGDVVLFDIAEGTPQGKALDIAQSGPSEGFDAVMKGANSYEDIAGADVCIVTAGVPRKPGMSRDDLIGINLKVMKSVGEGIKAHAPNAFVICITNPLDAMVWALQQFSGLPPEKVVGMAGVLDSARFRHFLSVEFNVSMRDVTAFVLGGHGDTMVPLVRYSTVAGIPLPDLVQMGWTSQEKLDQIVQRTRDGGAEIVGLLKTGSAYYAPATSAIEMAEAYLKDQKRLLPCAAWVDGAFGLDGMYVGVPTIIGAGGIEKVVDIKLNADEQAMFDKSVDAVKGLVAACKGIEPSLA.

Residues G10–G15 and D34 contribute to the NAD(+) site. Substrate is bound by residues R83 and R89. NAD(+)-binding positions include N96 and I119–N121. Substrate-binding residues include N121 and R152. The active-site Proton acceptor is H176.

The protein belongs to the LDH/MDH superfamily. MDH type 3 family.

It carries out the reaction (S)-malate + NAD(+) = oxaloacetate + NADH + H(+). In terms of biological role, catalyzes the reversible oxidation of malate to oxaloacetate. In Cereibacter sphaeroides (strain ATCC 17025 / ATH 2.4.3) (Rhodobacter sphaeroides), this protein is Malate dehydrogenase.